Consider the following 145-residue polypeptide: MSRIKAIIASVIICIIVCLSWAVNHYRDNAITYKEQRDKATSIIADMQKRQRDVAELDARYTKELADANATIETLRADVSAGRKRLQVSATCPKSTTGASGMGDGESPRLTADAELNYYRLRSGIDRITAQVNYLQEYIRSQCLK.

The Cytoplasmic portion of the chain corresponds to 1–3; it reads MSR. A helical; Signal-anchor for type II membrane protein transmembrane segment spans residues 4–24; it reads IKAIIASVIICIIVCLSWAVN. Residues 25 to 145 are Periplasmic-facing; the sequence is HYRDNAITYK…QEYIRSQCLK (121 aa).

It belongs to the Lambdavirus i-spanin family. As to quaternary structure, homodimer; disulfide-linked. Interacts (via C-terminus) with the spanin outer lipoprotein subunit (via C-terminus). Part of the spanin complex which spans the entire periplasmic space. The spanin complex is composed of one homodimer of the i-spanin linked by intermolecular disulfide bonds involving two Cys residues and one homodimer of the o-spanin covalently linked by an intermolecular disulfide bond involving one Cys.

Its subcellular location is the host cell inner membrane. Functionally, component of the spanin complex that disrupts the host outer membrane and participates in cell lysis during virus exit. The spanin complex conducts the final step in host lysis by disrupting the outer membrane after holin and endolysin action have permeabilized the inner membrane and degraded the host peptidoglycans. Host outer membrane disruption is due to local fusion between the inner and outer membrane performed by the spanin complex. In Salmonella typhimurium (Bacteriophage P22), this protein is Spanin, inner membrane subunit (15).